The sequence spans 516 residues: Poly(U)-binding-splicing factor PUF60-B (516 aa).

RRM domains lie at C86–S164 and N183–T261. Residues T356 to E398 are disordered. Over residues T372–S388 the composition is skewed to basic and acidic residues. The region spanning T419–Q506 is the RRM 3; atypical domain.

The protein belongs to the RRM half pint family.

Its subcellular location is the nucleus. In terms of biological role, DNA- and RNA-binding protein, involved in transcription repression and pre-mRNA splicing. This chain is Poly(U)-binding-splicing factor PUF60-B (puf60b), found in Danio rerio (Zebrafish).